The sequence spans 868 residues: Facilitated trehalose transporter Tret1 (868 aa).

Disordered stretches follow at residues 1 to 213 and 257 to 314; these read MSGR…QKAT and KESS…LIHR. Residues 1-403 lie on the Cytoplasmic side of the membrane; that stretch reads MSGRDNRGAG…VYRPTTNPIY (403 aa). Residues 25–43 show a composition bias toward basic and acidic residues; sequence KLKEKLTRAGDDQGYHRVE. Composition is skewed to low complexity over residues 44–57, 79–91, and 117–126; these read SNLS…SLDT, PQQQ…QQLR, and PFQQQQQRTP. Composition is skewed to basic and acidic residues over residues 146-155 and 257-290; these read EIREHRDRQQ and KESS…KLDK. 5 positions are modified to phosphoserine: Ser-259, Ser-260, Ser-261, Ser-331, and Ser-333. The segment at 335 to 367 is disordered; that stretch reads EDFHTSRQHFQQQRSISTDSRKSRRPYEMDEMG. Residues 342–352 are compositionally biased toward polar residues; it reads QHFQQQRSIST. The segment covering 353-367 has biased composition (basic and acidic residues); that stretch reads DSRKSRRPYEMDEMG. The helical transmembrane segment at 404–424 threads the bilayer; sequence IWTQVLAALSVSLGSLVVGFV. Topologically, residues 425–451 are extracellular; that stretch reads SAYTSPALVSMTNRNMTSFEVTPQAAS. A glycan (N-linked (GlcNAc...) asparagine) is linked at Asn-439. The helical transmembrane segment at 452 to 472 threads the bilayer; it reads WVGGIMPLAGLAGGIAGGPFI. Residues 473–484 are Cytoplasmic-facing; sequence EYLGRRNTILAT. A helical membrane pass occupies residues 485-505; sequence AIPFIVSSLLIACAVNVAMVL. Topologically, residues 506 to 508 are extracellular; the sequence is AGR. The helical transmembrane segment at 509–529 threads the bilayer; sequence FLAGFCVGIASLSLPVYLGET. Over 530-535 the chain is Cytoplasmic; the sequence is VQPEVR. The helical transmembrane segment at 536–556 threads the bilayer; sequence GTLGLLPTAFGNIGILLCFVA. Over 557–563 the chain is Extracellular; sequence GTYMDWS. A helical membrane pass occupies residues 564–584; it reads MLAFLGAALPVPFLILMFLIP. Over 585–653 the chain is Cytoplasmic; sequence ETPRWFVSRG…NLKPLSISLG (69 aa). Residues 654–674 traverse the membrane as a helical segment; the sequence is LMFFQQLSGINAVIFYTVSIF. Over 675–684 the chain is Extracellular; that stretch reads KDAGSTIDGN. The helical transmembrane segment at 685–705 threads the bilayer; the sequence is LCTIIVGIVNFMATFIATLLI. The Cytoplasmic segment spans residues 706–711; sequence DRAGRK. A helical membrane pass occupies residues 712-732; it reads ILLYVSNIAMIITLFVLGGFF. Topologically, residues 733 to 751 are extracellular; sequence YCKSHGQDVSQLGWLPLSC. A helical transmembrane segment spans residues 752–772; it reads FVIYILGFSLGFGPIPWLMMG. Residues 773 to 778 are Cytoplasmic-facing; sequence EILPSK. Residues 779 to 799 form a helical membrane-spanning segment; it reads IRGSAASVATAFNWSCTFVVT. The Extracellular segment spans residues 800–812; it reads KTFQDMIDFMGAH. A helical membrane pass occupies residues 813 to 833; it reads GAFWLFGSICFIGLFFVILYV. The Cytoplasmic portion of the chain corresponds to 834–868; it reads PETQGKTLEDIERKMMGRVRRMSSVANMKPLAFNM. Residues Ser-856 and Ser-857 each carry the phosphoserine modification.

Belongs to the major facilitator superfamily. Sugar transporter (TC 2.A.1.1) family. Trehalose transporter subfamily.

The protein resides in the cell membrane. Its function is as follows. Low-capacity facilitative transporter for trehalose. Does not transport maltose, sucrose or lactose. Mediates the bidirectional transfer of trehalose. Responsible for the transport of trehalose synthesized in the fat body and the incorporation of trehalose into other tissues that require a carbon source, thereby regulating trehalose levels in the hemolymph. In Drosophila pseudoobscura pseudoobscura (Fruit fly), this protein is Facilitated trehalose transporter Tret1.